Consider the following 154-residue polypeptide: MSTRSVSSSSYRRMFGGPGTASRPSSTRSYVTTSTRTYSLGSALRPTTSRTLYTSSPGGVYATRSSAVRLRSGVPGVRLLQDSVDFSLADAINTEFKNTRTNEKVELQELNDRFANYIDKVRFLEQQNKILLAELEQLKGQGKSRLGHLYEEEM.

Low complexity predominate over residues 1–13; that stretch reads MSTRSVSSSSYRR. Positions 1-31 are disordered; sequence MSTRSVSSSSYRRMFGGPGTASRPSSTRSYV. S2 is subject to N-acetylserine. The head stretch occupies residues 2–95; that stretch reads STRSVSSSSY…FSLADAINTE (94 aa). S5 bears the Phosphoserine mark. Position 7 is a phosphoserine; by PKA and PKC; alternate (S7). An O-linked (GlcNAc) serine; alternate glycan is attached at S7. Phosphoserine is present on S8. A phosphoserine; by PKC mark is found at S9 and S10. T20 carries the post-translational modification Phosphothreonine. Position 25 is a phosphoserine; by PKA and PKC (S25). The residue at position 26 (S26) is a Phosphoserine; by PKC. An O-linked (GlcNAc) threonine glycan is attached at T33. S34 carries an O-linked (GlcNAc) serine; alternate glycan. Position 34 is a phosphoserine; by PKC; alternate (S34). At S39 the chain carries Phosphoserine; by CaMK2, PKA, PKC and ROCK2. Phosphoserine; by PKC is present on S42. At S49 the chain carries Phosphoserine. A Phosphotyrosine modification is found at Y53. The residue at position 55 (S55) is a Phosphoserine. The residue at position 56 (S56) is a Phosphoserine; by CDK5 and CDK1. A Phosphotyrosine modification is found at Y61. S66 is modified (phosphoserine; by PKA and PKC). Phosphoserine; by AURKB and ROCK2 is present on S72. Position 83 is a phosphoserine; by CaMK2 (S83). Position 87 is a phosphoserine (S87). The tract at residues 96 to 131 is coil 1A; sequence FKNTRTNEKVELQELNDRFANYIDKVRFLEQQNKIL. A coiled-coil region spans residues 96 to 131; that stretch reads FKNTRTNEKVELQELNDRFANYIDKVRFLEQQNKIL. The region spanning 103–154 is the IF rod domain; it reads EKVELQELNDRFANYIDKVRFLEQQNKILLAELEQLKGQGKSRLGHLYEEEM. K104 participates in a covalent cross-link: Glycyl lysine isopeptide (Lys-Gly) (interchain with G-Cter in SUMO2). Y117 is modified (phosphotyrosine). K120, K129, and K139 each carry N6-acetyllysine; alternate. Residues K120 and K129 each carry the N6-succinyllysine; alternate modification. Residues K120, K129, and K139 each participate in a glycyl lysine isopeptide (Lys-Gly) (interchain with G-Cter in SUMO2); alternate cross-link. The tract at residues 132 to 153 is linker 1; that stretch reads LAELEQLKGQGKSRLGHLYEEE. Phosphoserine is present on S144. M154 is a region of interest (coil 1B).

It belongs to the intermediate filament family. As to quaternary structure, homomer assembled from elementary dimers. Identified in complexes that contain VIM, EZR, AHNAK, BFSP1, BFSP2, ANK2, PLEC, PRX and spectrin. Interacts with BCAS3. Interacts with LGSN. Interacts with SYNM. Interacts (via rod region) with PLEC (via CH 1 domain). Interacts with STK33. Interacts with LARP6. Interacts with RAB8B. Interacts with TOR1A; the interaction associates TOR1A with the cytoskeleton. Interacts with TOR1AIP1. Interacts with TOR1AIP1. Interacts with DIAPH1. Interacts with EPPK1; interaction is dependent of higher-order structure of intermediate filament. Interacts with the non-receptor tyrosine kinase SRMS; the interaction leads to phosphorylation of VIM. Interacts with NOD2. Interacts (via head region) with CORO1C. Interacts with HDGF. Interacts with PRKCE (via phorbol-ester/DAG-type 2 domain). Interacts with BFSP2. Interacts with PPL. Interacts with PKP1 and PKP2. Interacts with SCRIB (via PDZ domains); the interaction protects SCRIB from proteasomal degradation and facilitates SCRIB localization to intermediate filaments, the interaction is reduced by cell contact inhibition. One of the most prominent phosphoproteins in various cells of mesenchymal origin. Phosphorylation is enhanced during cell division, at which time vimentin filaments are significantly reorganized. Phosphorylation by PKN1 inhibits the formation of filaments. Filament disassembly during mitosis is promoted by phosphorylation at Ser-55 as well as by nestin. Phosphorylated at Ser-56 by CDK5 during neutrophil secretion in the cytoplasm. Phosphorylated by STK33. Phosphorylated on tyrosine residues by SRMS.

Its subcellular location is the cytoplasm. The protein localises to the cytoskeleton. The protein resides in the nucleus matrix. It is found in the cell membrane. Vimentins are class-III intermediate filaments found in various non-epithelial cells, especially mesenchymal cells. Vimentin is attached to the nucleus, endoplasmic reticulum, and mitochondria, either laterally or terminally. Plays a role in cell directional movement, orientation, cell sheet organization and Golgi complex polarization at the cell migration front. Protects SCRIB from proteasomal degradation and facilitates its localization to intermediate filaments in a cell contact-mediated manner. Functionally, involved with LARP6 in the stabilization of type I collagen mRNAs for CO1A1 and CO1A2. The protein is Vimentin (VIM) of Ovis aries (Sheep).